A 236-amino-acid chain; its full sequence is uncharacterized protein (236 aa).

Positions 117-160 constitute an RPE1 insert domain; the sequence is RYLSKQTDRNEFITTAESYIGISKHKSTNITYKLPLKEQFCNMS.

This is an uncharacterized protein from Rickettsia prowazekii (strain Madrid E).